Consider the following 175-residue polypeptide: Large ribosomal subunit protein uL10 (175 aa).

This sequence belongs to the universal ribosomal protein uL10 family. As to quaternary structure, part of the ribosomal stalk of the 50S ribosomal subunit. The N-terminus interacts with L11 and the large rRNA to form the base of the stalk. The C-terminus forms an elongated spine to which L12 dimers bind in a sequential fashion forming a multimeric L10(L12)X complex.

Forms part of the ribosomal stalk, playing a central role in the interaction of the ribosome with GTP-bound translation factors. The polypeptide is Large ribosomal subunit protein uL10 (Prochlorococcus marinus (strain MIT 9215)).